A 59-amino-acid chain; its full sequence is Large ribosomal subunit protein uL30 (59 aa).

Belongs to the universal ribosomal protein uL30 family. In terms of assembly, part of the 50S ribosomal subunit.

This chain is Large ribosomal subunit protein uL30, found in Hydrogenobaculum sp. (strain Y04AAS1).